Consider the following 441-residue polypeptide: Mannose-6-phosphate isomerase 2 (441 aa).

Positions 131, 133, 158, and 296 each coordinate Zn(2+). Residue R315 is part of the active site.

The protein belongs to the mannose-6-phosphate isomerase type 1 family. Requires Zn(2+) as cofactor. In terms of tissue distribution, not expressed in any organs under light (at protein level).

It carries out the reaction D-mannose 6-phosphate = D-fructose 6-phosphate. Its pathway is nucleotide-sugar biosynthesis; GDP-alpha-D-mannose biosynthesis; alpha-D-mannose 1-phosphate from D-fructose 6-phosphate: step 1/2. Inhibited by EDTA, Zn(2+), Cd(2+), DTT, p-chloromercuribenzoate and L-ascorbic acid (AsA). Involved in the synthesis of the GDP-mannose and dolichol-phosphate-mannose required for a number of critical mannosyl transfer reactions. This Arabidopsis thaliana (Mouse-ear cress) protein is Mannose-6-phosphate isomerase 2 (PMI2).